Consider the following 554-residue polypeptide: Chaperonin GroEL (554 aa).

Residues 30–33 (TLGP), Lys-51, 87–91 (DGTTT), Gly-416, and Asp-503 contribute to the ATP site.

It belongs to the chaperonin (HSP60) family. Forms a cylinder of 14 subunits composed of two heptameric rings stacked back-to-back. Interacts with the co-chaperonin GroES.

The protein resides in the cytoplasm. The enzyme catalyses ATP + H2O + a folded polypeptide = ADP + phosphate + an unfolded polypeptide.. Functionally, together with its co-chaperonin GroES, plays an essential role in assisting protein folding. The GroEL-GroES system forms a nano-cage that allows encapsulation of the non-native substrate proteins and provides a physical environment optimized to promote and accelerate protein folding. The protein is Chaperonin GroEL of Holospora obtusa.